The chain runs to 611 residues: UvrABC system protein C (611 aa).

The 79-residue stretch at 19–97 (QRPGVYRMVD…IKELRPRYNV (79 aa)) folds into the GIY-YIG domain. The UVR domain maps to 207–242 (NQVIEELGARMEAASERLEFEAAAQYRDRIQALQAV).

The protein belongs to the UvrC family. As to quaternary structure, interacts with UvrB in an incision complex.

It localises to the cytoplasm. Its function is as follows. The UvrABC repair system catalyzes the recognition and processing of DNA lesions. UvrC both incises the 5' and 3' sides of the lesion. The N-terminal half is responsible for the 3' incision and the C-terminal half is responsible for the 5' incision. The polypeptide is UvrABC system protein C (Alkalilimnicola ehrlichii (strain ATCC BAA-1101 / DSM 17681 / MLHE-1)).